Consider the following 221-residue polypeptide: MNEEKAVVVFSGGQDSTTCLFWAKKQFGEVEAVTFDYGQRHRREIDVAQAIADELGVRHTVLDLSLLGQLAPNALTRRDIAIEQKKGELPTTFVDGRNLLFLSFAAVFAKQRGARHIVTGVCETDFSGYPDCRDVFIKSLNVTLNLAMDYEFVIHTPLMWLTKAETWKLADELGALEFIRTKTLTCYNGIIADGCGECPACALRKRGLDEYLREKAEVESR.

Residue 10 to 20 (FSGGQDSTTCL) coordinates ATP. 4 residues coordinate Zn(2+): cysteine 186, cysteine 195, cysteine 198, and cysteine 201.

This sequence belongs to the QueC family. In terms of assembly, homodimer. The cofactor is Zn(2+).

The enzyme catalyses 7-carboxy-7-deazaguanine + NH4(+) + ATP = 7-cyano-7-deazaguanine + ADP + phosphate + H2O + H(+). Its pathway is purine metabolism; 7-cyano-7-deazaguanine biosynthesis. In terms of biological role, catalyzes the ATP-dependent conversion of 7-carboxy-7-deazaguanine (CDG) to 7-cyano-7-deazaguanine (preQ(0)). The polypeptide is 7-cyano-7-deazaguanine synthase (Geobacillus kaustophilus (strain HTA426)).